The sequence spans 185 residues: Ribosome-recycling factor (185 aa).

This sequence belongs to the RRF family.

It localises to the cytoplasm. Its function is as follows. Responsible for the release of ribosomes from messenger RNA at the termination of protein biosynthesis. May increase the efficiency of translation by recycling ribosomes from one round of translation to another. The polypeptide is Ribosome-recycling factor (Shewanella piezotolerans (strain WP3 / JCM 13877)).